The sequence spans 550 residues: MFCVQCEQTIRTPAGNGCSYAQGMCGKTAETSDLQDLLIATLQGLSAWAVKAREYGIINHDVDSFAPRAFFSTLTNVNFDSPRIVGYAREAIALREALKAQCLAVDANARVDNPMADLQLMSDDLGELQRQAAEFTPNKDKAAIGENILGLRLLCLYGLKGAAAYMEHAHVLGQYDNDIYAQYHKIMAWLGTWPADMNALLECSMEIGQMNFKVMSILDAGETGKYGHPTPTQVNVKATAGKCILISGHDLKDLYNLLEQTEGTGVNVYTHGEMLPAHGYPELRKFKHLVGNYGSGWQNQQVEFARFPGPIVMTSNCIIDPTVGAYDDRIWTRSIVGWPGVRHLDGEDFSAVIAQAQQMAGFPYSEIPHLITVGFGRQTLLGAADTLIDLVSREKLRHIFLLGGCDGARGERHYFTDFATSVPDDCLILTLACGKYRFNKLEFGDIEGLPRLVDAGQCNDAYSAIILAVTLAEKLGCGVNDLPLSLVLSWFEQKAIVILLTLLSLGVKNIVTGPTAPGFLTPDLLAVLNEKFGLRSITTVEEDMKQLLSA.

Cys3, Cys6, Cys18, and Cys25 together coordinate [2Fe-2S] cluster. 8 residues coordinate hybrid [4Fe-2O-2S] cluster: His249, Glu273, Cys317, Cys405, Cys433, Cys458, Glu492, and Lys494. Cysteine persulfide is present on Cys405.

This sequence belongs to the HCP family. It depends on [2Fe-2S] cluster as a cofactor. Hybrid [4Fe-2O-2S] cluster is required as a cofactor.

The protein resides in the cytoplasm. The enzyme catalyses A + NH4(+) + H2O = hydroxylamine + AH2 + H(+). Catalyzes the reduction of hydroxylamine to form NH(3) and H(2)O. This is Hydroxylamine reductase from Escherichia coli O6:K15:H31 (strain 536 / UPEC).